Reading from the N-terminus, the 126-residue chain is Large ribosomal subunit protein bL12 (126 aa).

This sequence belongs to the bacterial ribosomal protein bL12 family. In terms of assembly, homodimer. Part of the ribosomal stalk of the 50S ribosomal subunit. Forms a multimeric L10(L12)X complex, where L10 forms an elongated spine to which 2 to 4 L12 dimers bind in a sequential fashion. Binds GTP-bound translation factors.

Its function is as follows. Forms part of the ribosomal stalk which helps the ribosome interact with GTP-bound translation factors. Is thus essential for accurate translation. In Acidovorax ebreus (strain TPSY) (Diaphorobacter sp. (strain TPSY)), this protein is Large ribosomal subunit protein bL12.